Consider the following 387-residue polypeptide: Succinate--CoA ligase [ADP-forming] subunit beta (387 aa).

In terms of domain architecture, ATP-grasp spans 9–245 (KDLLESYGLK…KSQENAKELK (237 aa)). ATP is bound by residues Lys-46, 53-55 (GRG), Glu-100, Tyr-103, and Glu-108. 2 residues coordinate Mg(2+): Asn-200 and Asp-214. Residues Asn-265 and 322–324 (GIV) each bind substrate.

This sequence belongs to the succinate/malate CoA ligase beta subunit family. Heterotetramer of two alpha and two beta subunits. It depends on Mg(2+) as a cofactor.

It carries out the reaction succinate + ATP + CoA = succinyl-CoA + ADP + phosphate. The catalysed reaction is GTP + succinate + CoA = succinyl-CoA + GDP + phosphate. It participates in carbohydrate metabolism; tricarboxylic acid cycle; succinate from succinyl-CoA (ligase route): step 1/1. Succinyl-CoA synthetase functions in the citric acid cycle (TCA), coupling the hydrolysis of succinyl-CoA to the synthesis of either ATP or GTP and thus represents the only step of substrate-level phosphorylation in the TCA. The beta subunit provides nucleotide specificity of the enzyme and binds the substrate succinate, while the binding sites for coenzyme A and phosphate are found in the alpha subunit. In Francisella tularensis subsp. tularensis (strain WY96-3418), this protein is Succinate--CoA ligase [ADP-forming] subunit beta.